A 156-amino-acid polypeptide reads, in one-letter code: Ribosome maturation factor RimP (156 aa).

Belongs to the RimP family.

The protein localises to the cytoplasm. Required for maturation of 30S ribosomal subunits. The protein is Ribosome maturation factor RimP of Prochlorococcus marinus (strain NATL1A).